Consider the following 183-residue polypeptide: Ferritin light chain 1 (183 aa).

Positions 7-156 (QNYSTEVEAA…NHLTNLRRVA (150 aa)) constitute a Ferritin-like diiron domain. Fe cation is bound by residues glutamate 54, glutamate 57, glutamate 58, glutamate 61, and glutamate 64.

It belongs to the ferritin family. Oligomer of 24 subunits. There are two types of subunits: L (light) chain and H (heavy) chain. The major chain can be light or heavy, depending on the species and tissue type. The functional molecule forms a roughly spherical shell with a diameter of 12 nm and contains a central cavity into which the insoluble mineral iron core is deposited. Interacts with NCOA4. In terms of tissue distribution, in rat liver, the light chain is the major chain.

The protein resides in the cytoplasmic vesicle. The protein localises to the autophagosome. Its subcellular location is the cytoplasm. It is found in the autolysosome. Functionally, stores iron in a soluble, non-toxic, readily available form. Important for iron homeostasis. Iron is taken up in the ferrous form and deposited as ferric hydroxides after oxidation. Also plays a role in delivery of iron to cells. Mediates iron uptake in capsule cells of the developing kidney. Delivery to lysosomes by the cargo receptor NCOA4 for autophagic degradation and release or iron. This chain is Ferritin light chain 1 (Ftl1), found in Rattus norvegicus (Rat).